We begin with the raw amino-acid sequence, 227 residues long: MTDLSPVLTIDGPSGAGKGTVSRIVAARLGWHYLDSGALYRAVGVAASWADLDVSDPAALVRCTFDTKVEFDDAGEAGLRVLVNGADATGELRLETTGALASAIAAIPEVRSALKERQRAFRRAPGLVADGRDMGTVIFPDAAYKVFLTASAEERAGRRHKQLMEKGVPVIFDDLLREIMARDARDAQRVVAPLRPAEDAVLIDTSGMGIEDVVQRVVGLLAGRTPS.

12–20 (GPSGAGKGT) provides a ligand contact to ATP.

The protein belongs to the cytidylate kinase family. Type 1 subfamily.

The protein localises to the cytoplasm. It carries out the reaction CMP + ATP = CDP + ADP. It catalyses the reaction dCMP + ATP = dCDP + ADP. The protein is Cytidylate kinase of Xanthomonas axonopodis pv. citri (strain 306).